The following is a 334-amino-acid chain: Syntaxin-18 (334 aa).

At 1 to 308 (MAVDITLLFR…EDIREAIKNN (308 aa)) the chain is on the cytoplasmic side. Disordered regions lie at residues 29-50 (GGAD…GDFS) and 166-225 (LSKL…GEDE). Composition is skewed to basic and acidic residues over residues 33-50 (GSRD…GDFS) and 166-182 (LSKL…DSTS). The segment covering 183–192 (EKAPQNASQD) has biased composition (polar residues). Residues 193 to 207 (SEGKPAAEELPEKPL) are compositionally biased toward basic and acidic residues. A t-SNARE coiled-coil homology domain is found at 242 to 304 (IGEMNSLFDE…KEGNEDIREA (63 aa)). A helical; Anchor for type IV membrane protein transmembrane segment spans residues 309 to 329 (AGFRVWILFFLVMCSFSLLFL). Residues 330–334 (DWYDS) lie on the Lumenal side of the membrane.

It belongs to the syntaxin family. As to quaternary structure, component of a SNARE complex consisting of STX18, USE1L, BNIP1/SEC20L, and SEC22B. RINT1/TIP20L and ZW10 are associated with the complex through interaction with BNIP1/SEC20L. Interacts directly with USE1L and BNIP1/SEC20L.

It localises to the endoplasmic reticulum membrane. Its subcellular location is the golgi apparatus membrane. Syntaxin that may be involved in targeting and fusion of Golgi-derived retrograde transport vesicles with the ER. The chain is Syntaxin-18 (Stx18) from Mus musculus (Mouse).